Reading from the N-terminus, the 388-residue chain is Leucine aminopeptidase 1 (388 aa).

Positions 1–19 (MKSLSLLALAAIAPPAAVA) are cleaved as a signal peptide. Residues 20-88 (AVVDHQVPFE…SVKSHERIQV (69 aa)) constitute a propeptide that is removed on maturation. N-linked (GlcNAc...) asparagine glycosylation is present at asparagine 180. Zn(2+)-binding residues include histidine 188, aspartate 207, glutamate 246, and aspartate 273. A disulfide bond links cysteine 322 and cysteine 326. Position 355 (histidine 355) interacts with Zn(2+).

Belongs to the peptidase M28 family. M28E subfamily. As to quaternary structure, monomer. Zn(2+) is required as a cofactor.

It localises to the secreted. In terms of biological role, extracellular aminopeptidase that allows assimilation of proteinaceous substrates. The protein is Leucine aminopeptidase 1 (LAP1) of Coccidioides posadasii (strain RMSCC 757 / Silveira) (Valley fever fungus).